We begin with the raw amino-acid sequence, 156 residues long: Small ribosomal subunit protein uS7 (156 aa).

The protein belongs to the universal ribosomal protein uS7 family. In terms of assembly, part of the 30S ribosomal subunit. Contacts proteins S9 and S11.

In terms of biological role, one of the primary rRNA binding proteins, it binds directly to 16S rRNA where it nucleates assembly of the head domain of the 30S subunit. Is located at the subunit interface close to the decoding center, probably blocks exit of the E-site tRNA. The polypeptide is Small ribosomal subunit protein uS7 (Shewanella amazonensis (strain ATCC BAA-1098 / SB2B)).